Reading from the N-terminus, the 414-residue chain is Serine hydroxymethyltransferase (414 aa).

Residues Leu-121 and 125-127 each bind (6S)-5,6,7,8-tetrahydrofolate; that span reads GHL. Lys-229 bears the N6-(pyridoxal phosphate)lysine mark.

The protein belongs to the SHMT family. In terms of assembly, homodimer. It depends on pyridoxal 5'-phosphate as a cofactor.

Its subcellular location is the cytoplasm. The catalysed reaction is (6R)-5,10-methylene-5,6,7,8-tetrahydrofolate + glycine + H2O = (6S)-5,6,7,8-tetrahydrofolate + L-serine. It participates in one-carbon metabolism; tetrahydrofolate interconversion. It functions in the pathway amino-acid biosynthesis; glycine biosynthesis; glycine from L-serine: step 1/1. In terms of biological role, catalyzes the reversible interconversion of serine and glycine with tetrahydrofolate (THF) serving as the one-carbon carrier. This reaction serves as the major source of one-carbon groups required for the biosynthesis of purines, thymidylate, methionine, and other important biomolecules. Also exhibits THF-independent aldolase activity toward beta-hydroxyamino acids, producing glycine and aldehydes, via a retro-aldol mechanism. This chain is Serine hydroxymethyltransferase, found in Polaromonas naphthalenivorans (strain CJ2).